Here is a 639-residue protein sequence, read N- to C-terminus: MNAQPLLPRIQSPADVRRLSRAELKQLADELREFVLQSVSRTGGHLSSNLGTVELTVALHHVFDTPEDRLVWDVGHQTYPHKILTGRRDRMSTLRQLGGLSGFPRRDESEYDTFGTAHSSTSISAALGMALAAQQKGEKRHAVAIIGDGSMTAGMAFEALNNGGMPHAGRVPNLLVILNDNDMSISPPVGALNKYLARLLSGRFYAAAREGAKSVLKSAPTLFELARRFEEHAKGMVVPGTIFEEFGFNYVGPIDGHDLDALIPTLENLRDKPGAQFLHVVTKKGYGYKLAEADPIAYHGPGKFDPQIGLVKPATPPKTTFTQVFGQWLCDMAAADPKLVAITPAMREGSGMVEFHKRFPERYHDVGIAEQHAVTFAAGLACEGLRPVVAIYSTFLQRAYDQLIHDVALQNLPMVFALDRAGLVGADGATHAGAYDIAFVRCIPNMSLLAPADEAETRRALSTAFAHDGPVAVRYPRGSGAGTAVETGFETLPWGRGEVRRQAGGHVRGPRIAILAFGTLLYPALAAAEKLDATVANMRFIKPLDAALVEQLARTHDALVTVEEGCLMGGAGSAVLEALQAAGLQTPVLTLGLPDQFIEHGDPALLLAACGLDSAGIEAAIQKRFCASAPSHLRPVANG.

Thiamine diphosphate contacts are provided by residues His-76 and 117–119; that span reads AHS. Residue Asp-148 coordinates Mg(2+). Thiamine diphosphate contacts are provided by residues 149-150, Asn-181, Tyr-288, and Glu-370; that span reads GS. Residue Asn-181 coordinates Mg(2+).

This sequence belongs to the transketolase family. DXPS subfamily. Homodimer. Requires Mg(2+) as cofactor. It depends on thiamine diphosphate as a cofactor.

It carries out the reaction D-glyceraldehyde 3-phosphate + pyruvate + H(+) = 1-deoxy-D-xylulose 5-phosphate + CO2. It functions in the pathway metabolic intermediate biosynthesis; 1-deoxy-D-xylulose 5-phosphate biosynthesis; 1-deoxy-D-xylulose 5-phosphate from D-glyceraldehyde 3-phosphate and pyruvate: step 1/1. Catalyzes the acyloin condensation reaction between C atoms 2 and 3 of pyruvate and glyceraldehyde 3-phosphate to yield 1-deoxy-D-xylulose-5-phosphate (DXP). The protein is 1-deoxy-D-xylulose-5-phosphate synthase of Leptothrix cholodnii (strain ATCC 51168 / LMG 8142 / SP-6) (Leptothrix discophora (strain SP-6)).